The following is an 870-amino-acid chain: H(+)/Cl(-) exchange transporter 6 (870 aa).

Residues 1–80 (MAGCRGSVCC…KKGRRYEAVK (80 aa)) are Cytoplasmic-facing. The next 2 membrane-spanning stretches (helical) occupy residues 81 to 113 (WMVV…FGVV) and 128 to 150 (LSLL…LVLI). The Selectivity filter part_1 signature appears at 156 to 160 (GSGIP). Chloride is bound at residue S157. Residues 159-166 (IPEIKCYL) constitute an intramembrane region (helical). The next 2 helical transmembrane spans lie at 176–194 (RLRT…VSGG) and 200–217 (EGPM…LPQF). Residues 198 to 202 (GKEGP) carry the Selectivity filter part_2 motif. Intramembrane regions (helical) lie at residues 241–253 (FVSA…VAAA) and 257–265 (PIGGTLFSL). 3 helical membrane passes run 277–294 (TWKV…LNFF), 335–364 (GFFV…YRMR), and 371–392 (KLVR…VFVA). N410, N423, and N433 each carry an N-linked (GlcNAc...) asparagine glycan. Helical transmembrane passes span 463–482 (PVTL…WTFG) and 488–512 (GLFV…KSYI). The Selectivity filter part_3 motif lies at 488–492 (GLFVP). Residue F490 coordinates chloride. Residues 520–534 (GTFALIGAAAFLGGV) constitute an intramembrane region (helical). An intramembrane region (note=Loop between two helices) is located at residues 535–537 (VRM). The segment at residues 538 to 549 (TISLTVILIEST) is an intramembrane region (helical). Positions 550–553 (NEIT) form an intramembrane region, note=Loop between two helices. The chain crosses the membrane as a helical span at residues 554–572 (YGLPIMVTLMVAKWTGDLF). Residues 573–870 (NKGIYDVHIG…ARLRQHYQTL (298 aa)) are Cytoplasmic-facing. Y577 is a chloride binding site. In terms of domain architecture, CBS 1 spans 606–663 (MEPNLTYVYPHTRIQSLVSILRTTVHHAFPVVTENRGNEKEFMKGNQLISNNIKFKKS). ATP is bound at residue 631 to 633 (HHA). S774 bears the Phosphoserine mark. A CBS 2 domain is found at 808-869 (MNPSPFTVSP…QARLRQHYQT (62 aa)). 850-853 (TRHN) is an ATP binding site.

It belongs to the chloride channel (TC 2.A.49) family. ClC-6/CLCN6 subfamily. Post-translationally, N-glycosylated on several asparagine residues. In terms of tissue distribution, detected in whole brain and in hippocampus neurons (at protein level). Detected in brain, trigeminus, dorsal root ganglion, spinal cord, eye, kidney, testis, skeletal muscle, thymus and pancreas. Isoform ClC-6c is expressed only in kidney.

It localises to the late endosome membrane. It catalyses the reaction 2 chloride(in) + H(+)(out) = 2 chloride(out) + H(+)(in). Its function is as follows. Voltage-gated channel mediating the exchange of chloride ions against protons. Functions as antiporter and contributes to the acidification of the late endosome lumen. The CLC channel family contains both chloride channels and proton-coupled anion transporters that exchange chloride or another anion for protons. The presence of conserved gating glutamate residues is typical for family members that function as antiporters. In Mus musculus (Mouse), this protein is H(+)/Cl(-) exchange transporter 6.